The chain runs to 71 residues: V-type proton ATPase subunit e (71 aa).

The Lumenal segment spans residues 1–2 (MS). The chain crosses the membrane as a helical span at residues 3-23 (FFHVVFVAFVIAAIGAAGWFV). Residues 24–35 (TPKGKNQTLLRT) lie on the Cytoplasmic side of the membrane. A helical membrane pass occupies residues 36–56 (SLLLTLTCCYLMWAITYLCQL). Residues 57-71 (HPLITPRRSDLRMEY) are Lumenal-facing.

Belongs to the V-ATPase e1/e2 subunit family. V-ATPase is a heteromultimeric enzyme composed of a peripheral catalytic V1 complex (components A to H) attached to an integral membrane V0 proton pore complex (components: a, c, c', c'', d, e, f and VOA1).

The protein resides in the vacuole membrane. Subunit of the V0 complex of vacuolar(H+)-ATPase (V-ATPase), a multisubunit enzyme composed of a peripheral complex (V1) that hydrolyzes ATP and a membrane integral complex (V0) that translocates protons. V-ATPase is responsible for acidifying and maintaining the pH of intracellular compartments. The polypeptide is V-type proton ATPase subunit e (VMA9) (Cryptococcus neoformans var. neoformans serotype D (strain JEC21 / ATCC MYA-565) (Filobasidiella neoformans)).